We begin with the raw amino-acid sequence, 291 residues long: MSNNNISTLSSVTISELLDAGIHYGHKASRWNPKMAPYIYGKRDDVHIINLDYTVSQIDVISKVIYKEIKEKNGRILFVDTRRHRDIVAQYAENCGQYYVTHRWLGGMLTNWVTVSKAINKLDQLEKKLADPEKIVGYTKREILSMQRMRDNLHRSFGGIRNMGGKPTLLIVMDINKDHIAVKEARREKIPIIAIVDTNSDPDLVDYPIPGNDDAIRSIRLYCKIFSDAVLLAIEHMLAASGVDLGAINGDNPSERLKAAKKITKMKLSKKVTKINVEQDQNKLEKDNKDL.

It belongs to the universal ribosomal protein uS2 family.

The polypeptide is Small ribosomal subunit protein uS2 (Orientia tsutsugamushi (strain Boryong) (Rickettsia tsutsugamushi)).